We begin with the raw amino-acid sequence, 326 residues long: MSTDSTRYPIQIEKASNDPTLLLNHTCLRVKDPARTVKFYTEHFGMKLLSRKDFEEAKFSLYFLSFPKDDIPKNKNGEPDVFSAHGVLELTHNWGTEKNPDYKINNGNEEPHRGFGHICFSVSDINKTCEELESQGVKFKKRLSEGRQKDIAFALGPDGYWIELITYSREGQEYPKGSVGNKFNHTMIRIKNPTRSLEFYQNVLGMKLLRTSEHESAKFTLYFLGYGVPKTDSVFSCESVLELTHNWGTENDPNFHYHNGNSEPQGYGHICISCDDAGALCKEIEVKYGDKIQWSPKFNQGRMKNIAFLKDPDGYSIEVVPHGLIA.

2 consecutive VOC domains span residues 22–167 (LLNH…LITY) and 182–322 (KFNH…VVPH). His-25 serves as a coordination point for Zn(2+). Substrate is bound at residue Arg-29. Glu-89 provides a ligand contact to Zn(2+). Residues Asn-93, Arg-113, His-117, and 147-148 (RQ) each bind substrate. Residue His-117 participates in Zn(2+) binding. Glu-163 provides a ligand contact to Zn(2+). Residues Glu-163 and Glu-318 each act as proton donor/acceptor in the active site.

This sequence belongs to the glyoxalase I family. Monomer. It depends on Zn(2+) as a cofactor.

The enzyme catalyses (R)-S-lactoylglutathione = methylglyoxal + glutathione. The protein operates within secondary metabolite metabolism; methylglyoxal degradation; (R)-lactate from methylglyoxal: step 1/2. Functionally, catalyzes the conversion of hemimercaptal, formed from methylglyoxal and glutathione, to S-lactoylglutathione. Can use gamma-glutamylcysteine as a substrate. The sequence is that of Glyoxalase I from Saccharomyces cerevisiae (strain ATCC 204508 / S288c) (Baker's yeast).